A 42-amino-acid polypeptide reads, in one-letter code: MSKIKQPISYPIFTFRWLAIHGLAVPTVFFLGAITSMQFIQR.

Residues 17–33 (WLAIHGLAVPTVFFLGA) form a helical membrane-spanning segment. Heme is bound at residue histidine 21.

The protein belongs to the PsbE/PsbF family. Heterodimer of an alpha subunit and a beta subunit. PSII is composed of 1 copy each of membrane proteins PsbA, PsbB, PsbC, PsbD, PsbE, PsbF, PsbH, PsbI, PsbJ, PsbK, PsbL, PsbM, PsbT, PsbX, PsbY, PsbZ, Psb30/Ycf12, at least 3 peripheral proteins of the oxygen-evolving complex and a large number of cofactors. It forms dimeric complexes. Heme b serves as cofactor.

It is found in the plastid. The protein localises to the chloroplast thylakoid membrane. This b-type cytochrome is tightly associated with the reaction center of photosystem II (PSII). PSII is a light-driven water:plastoquinone oxidoreductase that uses light energy to abstract electrons from H(2)O, generating O(2) and a proton gradient subsequently used for ATP formation. It consists of a core antenna complex that captures photons, and an electron transfer chain that converts photonic excitation into a charge separation. The protein is Cytochrome b559 subunit beta of Guillardia theta (Cryptophyte).